Here is a 531-residue protein sequence, read N- to C-terminus: Polypyrimidine tract-binding protein 2 (531 aa).

M1 carries the N-acetylmethionine modification. S26 and S27 each carry phosphoserine. 2 consecutive RRM domains span residues 59-133 (RVLH…YSNH) and 181-257 (LRII…FSKL). Phosphoserine is present on S308. 2 consecutive RRM domains span residues 338–412 (TVLL…LSKH) and 455–529 (ATLH…FSKS).

As to quaternary structure, monomer. Interacts with NOVA1; the interaction is direct. Identified in a mRNP complex, at least composed of DHX9, DDX3X, ELAVL1, HNRNPU, IGF2BP1, ILF3, PABPC1, PCBP2, PTBP2, STAU1, STAU2, SYNCRIP and YBX1. Part of a ternary complex containing KHSRP and HNRPH1. Interacts with NOVA2; the interaction is direct.

The protein localises to the nucleus. RNA-binding protein which binds to intronic polypyrimidine tracts and mediates negative regulation of exons splicing. May antagonize in a tissue-specific manner the ability of NOVA1 to activate exon selection. In addition to its function in pre-mRNA splicing, plays also a role in the regulation of translation. This Rattus norvegicus (Rat) protein is Polypyrimidine tract-binding protein 2.